The following is a 573-amino-acid chain: Sulfite reductase [NADPH] hemoprotein beta-component (573 aa).

The [4Fe-4S] cluster site is built by cysteine 438, cysteine 444, cysteine 483, and cysteine 487. Residue cysteine 487 coordinates siroheme.

It belongs to the nitrite and sulfite reductase 4Fe-4S domain family. Alpha(8)-beta(8). The alpha component is a flavoprotein, the beta component is a hemoprotein. Requires siroheme as cofactor. [4Fe-4S] cluster is required as a cofactor.

The enzyme catalyses hydrogen sulfide + 3 NADP(+) + 3 H2O = sulfite + 3 NADPH + 4 H(+). It participates in sulfur metabolism; hydrogen sulfide biosynthesis; hydrogen sulfide from sulfite (NADPH route): step 1/1. Its function is as follows. Component of the sulfite reductase complex that catalyzes the 6-electron reduction of sulfite to sulfide. This is one of several activities required for the biosynthesis of L-cysteine from sulfate. In Nitrosomonas eutropha (strain DSM 101675 / C91 / Nm57), this protein is Sulfite reductase [NADPH] hemoprotein beta-component.